Reading from the N-terminus, the 557-residue chain is MRSDMIKKGFDKAPHRSLLKATGLKDEDFDKPFIAICNSFIEIIPGHKHLNEFGKLVKEAVRAAGMVPFEFNTIGVDDGIAMGHIGMRYSLPSREIIADSVETVVNAHWFDGMICIPNCDKITPGMMMAALRINIPTVFVSGGPMAAGKTSKGEVVDLSSVFEGVGAYQSGKISEEELKDIEDHGCPSCGSCSGMFTANSMNCLCEVLGLALPGNGSILAIDPRREELIKQAAEKLKILIERDIKPRDIVTEEAIDDAFALDMAMGGSTNTVLHTLALAHEAGLDYDMSRIDAVSRRVPHLCKVSPASNWHMEDIDRAGGISAILKEMSRKEGVLHLDRITATGQTLRENIAHAEIKDKEVIHSLENPHSEEGGLRILKGNLAKDGAVIKSGATEVKRFEGPCVIFNSQDEALAGIMLGKVKKGDVVVIRYEGPRGGPGMPEMLAPTSAIAGMGLGADVALLTDGRFSGASRGISVGHISPEAAAGGTIALLEQGDIVCIDVEERLLEVRISDEELDKRKKEWKRPEPKVKTGWLGRYAQMVTSANTGAVLKVPNFD.

Asp78 serves as a coordination point for Mg(2+). Cys119 provides a ligand contact to [2Fe-2S] cluster. The Mg(2+) site is built by Asp120 and Lys121. Lys121 carries the post-translational modification N6-carboxylysine. Cys192 is a binding site for [2Fe-2S] cluster. Glu442 is a binding site for Mg(2+). Ser468 functions as the Proton acceptor in the catalytic mechanism.

Belongs to the IlvD/Edd family. In terms of assembly, homodimer. The cofactor is [2Fe-2S] cluster. It depends on Mg(2+) as a cofactor.

It carries out the reaction (2R)-2,3-dihydroxy-3-methylbutanoate = 3-methyl-2-oxobutanoate + H2O. The enzyme catalyses (2R,3R)-2,3-dihydroxy-3-methylpentanoate = (S)-3-methyl-2-oxopentanoate + H2O. It participates in amino-acid biosynthesis; L-isoleucine biosynthesis; L-isoleucine from 2-oxobutanoate: step 3/4. The protein operates within amino-acid biosynthesis; L-valine biosynthesis; L-valine from pyruvate: step 3/4. Functions in the biosynthesis of branched-chain amino acids. Catalyzes the dehydration of (2R,3R)-2,3-dihydroxy-3-methylpentanoate (2,3-dihydroxy-3-methylvalerate) into 2-oxo-3-methylpentanoate (2-oxo-3-methylvalerate) and of (2R)-2,3-dihydroxy-3-methylbutanoate (2,3-dihydroxyisovalerate) into 2-oxo-3-methylbutanoate (2-oxoisovalerate), the penultimate precursor to L-isoleucine and L-valine, respectively. The chain is Dihydroxy-acid dehydratase from Bacillus cereus (strain Q1).